The following is a 452-amino-acid chain: Transcription factor ETV6 (452 aa).

A compositionally biased stretch (polar residues) spans M1–I10. Residues M1–S30 form a disordered region. K11 carries the post-translational modification N6-acetyllysine; alternate. Residue K11 forms a Glycyl lysine isopeptide (Lys-Gly) (interchain with G-Cter in SUMO2); alternate linkage. Position 18 is a phosphothreonine (T18). S22 carries the phosphoserine modification. Positions A40–R124 constitute a PNT domain. The interval V158–S262 is disordered. Phosphoserine is present on residues S213 and S238. Residues Q230 to E250 show a composition bias toward polar residues. Phosphoserine; by MAPK14 is present on S257. K288 participates in a covalent cross-link: Glycyl lysine isopeptide (Lys-Gly) (interchain with G-Cter in SUMO2). An N6-acetyllysine; alternate modification is found at K302. K302 is covalently cross-linked (Glycyl lysine isopeptide (Lys-Gly) (interchain with G-Cter in SUMO2); alternate). Residue S323 is modified to Phosphoserine. Residues R339–M420 constitute a DNA-binding region (ETS). Residues K403 and K421 each participate in a glycyl lysine isopeptide (Lys-Gly) (interchain with G-Cter in SUMO2) cross-link.

The protein belongs to the ETS family. In terms of assembly, can form homodimers or heterodimers with TEL2 or FLI1. Interacts with L3MBTL1 and HDAC9. Phosphorylation of Ser-257 by MAPK14 (p38) inhibits ETV6 transcriptional repression. Ubiquitous.

The protein resides in the nucleus. In terms of biological role, transcriptional repressor; binds to the DNA sequence 5'-CCGGAAGT-3'. Plays a role in hematopoiesis and malignant transformation. The sequence is that of Transcription factor ETV6 (ETV6) from Homo sapiens (Human).